Consider the following 233-residue polypeptide: tRNA1(Val) (adenine(37)-N6)-methyltransferase (233 aa).

The protein belongs to the methyltransferase superfamily. tRNA (adenine-N(6)-)-methyltransferase family.

The protein resides in the cytoplasm. It catalyses the reaction adenosine(37) in tRNA1(Val) + S-adenosyl-L-methionine = N(6)-methyladenosine(37) in tRNA1(Val) + S-adenosyl-L-homocysteine + H(+). Its function is as follows. Specifically methylates the adenine in position 37 of tRNA(1)(Val) (anticodon cmo5UAC). This is tRNA1(Val) (adenine(37)-N6)-methyltransferase from Shewanella amazonensis (strain ATCC BAA-1098 / SB2B).